A 249-amino-acid chain; its full sequence is Ribonuclease 3 (249 aa).

In terms of domain architecture, RNase III spans 20 to 149 (FKEFQERISV…FIGALYLDQG (130 aa)). A Mg(2+)-binding site is contributed by E62. D66 is an active-site residue. D135 and E138 together coordinate Mg(2+). Residue E138 is part of the active site. Positions 175–244 (DFKSQLQEFV…AQEALAKMQK (70 aa)) constitute a DRBM domain. The disordered stretch occupies residues 223-249 (NGRSKKEAEQHAAQEALAKMQKHHTKQ).

The protein belongs to the ribonuclease III family. Homodimer. It depends on Mg(2+) as a cofactor.

The protein resides in the cytoplasm. The catalysed reaction is Endonucleolytic cleavage to 5'-phosphomonoester.. Its function is as follows. Digests double-stranded RNA. Involved in the processing of primary rRNA transcript to yield the immediate precursors to the large and small rRNAs (23S and 16S). Processes some mRNAs, and tRNAs when they are encoded in the rRNA operon. Processes pre-crRNA and tracrRNA of type II CRISPR loci if present in the organism. The chain is Ribonuclease 3 from Bacillus velezensis (strain DSM 23117 / BGSC 10A6 / LMG 26770 / FZB42) (Bacillus amyloliquefaciens subsp. plantarum).